Consider the following 259-residue polypeptide: Imidazole glycerol phosphate synthase subunit HisF (259 aa).

Catalysis depends on residues Asp-11 and Asp-130.

This sequence belongs to the HisA/HisF family. In terms of assembly, heterodimer of HisH and HisF.

Its subcellular location is the cytoplasm. The enzyme catalyses 5-[(5-phospho-1-deoxy-D-ribulos-1-ylimino)methylamino]-1-(5-phospho-beta-D-ribosyl)imidazole-4-carboxamide + L-glutamine = D-erythro-1-(imidazol-4-yl)glycerol 3-phosphate + 5-amino-1-(5-phospho-beta-D-ribosyl)imidazole-4-carboxamide + L-glutamate + H(+). It functions in the pathway amino-acid biosynthesis; L-histidine biosynthesis; L-histidine from 5-phospho-alpha-D-ribose 1-diphosphate: step 5/9. IGPS catalyzes the conversion of PRFAR and glutamine to IGP, AICAR and glutamate. The HisF subunit catalyzes the cyclization activity that produces IGP and AICAR from PRFAR using the ammonia provided by the HisH subunit. The chain is Imidazole glycerol phosphate synthase subunit HisF from Acidovorax ebreus (strain TPSY) (Diaphorobacter sp. (strain TPSY)).